Reading from the N-terminus, the 600-residue chain is Isocitrate dehydrogenase kinase/phosphatase (600 aa).

Residues 335–341 (APGIRGM) and Lys-356 each bind ATP. The active site involves Asp-390.

This sequence belongs to the AceK family.

It localises to the cytoplasm. It carries out the reaction L-seryl-[isocitrate dehydrogenase] + ATP = O-phospho-L-seryl-[isocitrate dehydrogenase] + ADP + H(+). Bifunctional enzyme which can phosphorylate or dephosphorylate isocitrate dehydrogenase (IDH) on a specific serine residue. This is a regulatory mechanism which enables bacteria to bypass the Krebs cycle via the glyoxylate shunt in response to the source of carbon. When bacteria are grown on glucose, IDH is fully active and unphosphorylated, but when grown on acetate or ethanol, the activity of IDH declines drastically concomitant with its phosphorylation. The sequence is that of Isocitrate dehydrogenase kinase/phosphatase from Bordetella parapertussis (strain 12822 / ATCC BAA-587 / NCTC 13253).